The primary structure comprises 46 residues: Pape peptide (46 aa).

The segment covering 1-10 (KQLLKEALAP) has biased composition (low complexity). The disordered stretch occupies residues 1–46 (KQLLKEALAPEPAPKPAPEPAPEPAPEPAPEAAPEPAAAAPEAAPE). Residues 11–33 (EPAPKPAPEPAPEPAPEPAPEAA) show a composition bias toward pro residues. 4 PAPE repeats span residues 16–19 (PAPE), 20–23 (PAPE), 24–27 (PAPE), and 28–31 (PAPE). Over residues 34-46 (PEPAAAAPEAAPE) the composition is skewed to low complexity.

In terms of tissue distribution, expressed by the venom gland.

The protein resides in the secreted. The sequence is that of Pape peptide from Tityus stigmurus (Brazilian scorpion).